Reading from the N-terminus, the 112-residue chain is Prostatic steroid-binding protein C2 (112 aa).

A signal peptide spans 1–20 (MRLSLCLLTILVVCCYEANG). Gln21 is subject to Pyrrolidone carboxylic acid.

The protein belongs to the secretoglobin family. Lipophilin subfamily. In terms of assembly, prostatein is composed of three different peptides called C1, C2 and C3. These form covalent C1:C3 (F) and C2:C3 (S) heterodimers whose noncovalent association forms tetrameric (C1:C3/C3:C2) prostatein molecules. In terms of processing, linked by three disulfide bonds to C3. The N-terminus is blocked.

It localises to the secreted. Part of prostatein which is the major secretory glycoprotein of ventral prostate gland. This is Prostatic steroid-binding protein C2 (Psbpc2) from Rattus norvegicus (Rat).